A 142-amino-acid polypeptide reads, in one-letter code: Large ribosomal subunit protein uL13 (142 aa).

Belongs to the universal ribosomal protein uL13 family. In terms of assembly, part of the 50S ribosomal subunit.

Its function is as follows. This protein is one of the early assembly proteins of the 50S ribosomal subunit, although it is not seen to bind rRNA by itself. It is important during the early stages of 50S assembly. This chain is Large ribosomal subunit protein uL13, found in Polynucleobacter asymbioticus (strain DSM 18221 / CIP 109841 / QLW-P1DMWA-1) (Polynucleobacter necessarius subsp. asymbioticus).